The primary structure comprises 201 residues: Recombination protein RecR (201 aa).

The C4-type zinc finger occupies Cys-57–Cys-72. Residues Thr-80–Pro-176 form the Toprim domain.

This sequence belongs to the RecR family.

May play a role in DNA repair. It seems to be involved in an RecBC-independent recombinational process of DNA repair. It may act with RecF and RecO. The protein is Recombination protein RecR of Ureaplasma parvum serovar 3 (strain ATCC 27815 / 27 / NCTC 11736).